Here is a 237-residue protein sequence, read N- to C-terminus: Eukaryotic translation initiation factor 3 subunit J (237 aa).

Positions 20–64 are disordered; it reads ANNINKWEGEDDDEDVKESWEDEEEKKDEEKPTKTEAPAKTKPNK. A compositionally biased stretch (acidic residues) spans 28 to 46; sequence GEDDDEDVKESWEDEEEKK. Basic and acidic residues predominate over residues 47 to 58; sequence DEEKPTKTEAPA. The stretch at 63–115 forms a coiled coil; sequence NKVLKAKLLEQECLEKEEEAKRLANMSTEEKLAEKLRLQKIQEESDLKSALET.

This sequence belongs to the eIF-3 subunit J family. Component of the eukaryotic translation initiation factor 3 (eIF-3) complex. The eIF-3 complex interacts with pix.

Its subcellular location is the cytoplasm. Its function is as follows. Component of the eukaryotic translation initiation factor 3 (eIF-3) complex, which is involved in protein synthesis of a specialized repertoire of mRNAs and, together with other initiation factors, stimulates binding of mRNA and methionyl-tRNAi to the 40S ribosome. The eIF-3 complex specifically targets and initiates translation of a subset of mRNAs involved in cell proliferation. The chain is Eukaryotic translation initiation factor 3 subunit J from Drosophila grimshawi (Hawaiian fruit fly).